A 313-amino-acid polypeptide reads, in one-letter code: Pantothenate synthetase (313 aa).

43–50 (MGALHEGH) serves as a coordination point for ATP. His50 (proton donor) is an active-site residue. Gln75 contributes to the (R)-pantoate binding site. Gln75 serves as a coordination point for beta-alanine. 161–164 (GEKD) is a binding site for ATP. Residue Gln167 participates in (R)-pantoate binding. ATP-binding positions include Val190 and 198–201 (LSSR).

This sequence belongs to the pantothenate synthetase family. In terms of assembly, homodimer.

It localises to the cytoplasm. The enzyme catalyses (R)-pantoate + beta-alanine + ATP = (R)-pantothenate + AMP + diphosphate + H(+). The protein operates within cofactor biosynthesis; (R)-pantothenate biosynthesis; (R)-pantothenate from (R)-pantoate and beta-alanine: step 1/1. Functionally, catalyzes the condensation of pantoate with beta-alanine in an ATP-dependent reaction via a pantoyl-adenylate intermediate. The sequence is that of Pantothenate synthetase from Mycobacterium sp. (strain JLS).